The chain runs to 417 residues: F-box protein At3g07870 (417 aa).

Residues 22–68 (GGGLESLPEDIIADIFSRLPISSIARLMFVCRSWRSVLTQHGRLSSS) enclose the F-box domain.

In Arabidopsis thaliana (Mouse-ear cress), this protein is F-box protein At3g07870.